The primary structure comprises 374 residues: DNA replication and repair protein RecF (374 aa).

30-37 (GNNAQGKS) serves as a coordination point for ATP.

This sequence belongs to the RecF family.

It localises to the cytoplasm. In terms of biological role, the RecF protein is involved in DNA metabolism; it is required for DNA replication and normal SOS inducibility. RecF binds preferentially to single-stranded, linear DNA. It also seems to bind ATP. The polypeptide is DNA replication and repair protein RecF (Nostoc punctiforme (strain ATCC 29133 / PCC 73102)).